The chain runs to 342 residues: Inositol-tetrakisphosphate 1-kinase 5 (342 aa).

K25 and K67 together coordinate 1D-myo-inositol 1,3,4-trisphosphate. Positions 102 and 154 each coordinate ATP. The 1D-myo-inositol 1,3,4-trisphosphate site is built by H165 and K197. ATP is bound by residues 186–197 and S212; that span reads QEFVNHGGVIFK. Positions 283, 298, and 300 each coordinate Mg(2+). N300 is a binding site for 1D-myo-inositol 1,3,4-trisphosphate.

Belongs to the ITPK1 family. As to quaternary structure, monomer. Mg(2+) is required as a cofactor. In terms of tissue distribution, expressed in roots, leaves, flowers, anthers and embryos.

The enzyme catalyses 1D-myo-inositol 3,4,5,6-tetrakisphosphate + ATP = 1D-myo-inositol 1,3,4,5,6-pentakisphosphate + ADP + H(+). The catalysed reaction is 1D-myo-inositol 1,3,4-trisphosphate + ATP = 1D-myo-inositol 1,3,4,5-tetrakisphosphate + ADP + H(+). It carries out the reaction 1D-myo-inositol 1,3,4-trisphosphate + ATP = 1D-myo-inositol 1,3,4,6-tetrakisphosphate + ADP + H(+). In terms of biological role, kinase that can phosphorylate various inositol polyphosphate such as Ins(3,4,5,6)P4 or Ins(1,3,4)P3 and participates in phytic acid biosynthesis in developing seeds. Phytic acid is the primary storage form of phosphorus in cereal grains and other plant seeds. The sequence is that of Inositol-tetrakisphosphate 1-kinase 5 (ITPK5) from Oryza sativa subsp. japonica (Rice).